The following is a 174-amino-acid chain: MPKSLEIYKGSCNWEESGLLGSCFSQGLALLPRVEWSGAILAHCIVDLPSSSDPPTSASHFSGLQAHTTTARWSLTLLPRLECSGTISAHYNLRLLGSSNSPVSASQVAETTEACHHTRLIFVFSVETGFHHVGQAGLKLLTSGDPPASASQSAGITGVSHSARPKSCFLQLLG.

This is an uncharacterized protein from Homo sapiens (Human).